A 201-amino-acid chain; its full sequence is Small ribosomal subunit protein uS4c (201 aa).

A compositionally biased stretch (basic residues) spans 1-14 (MSRYRGPRFKKIRR). The disordered stretch occupies residues 1-44 (MSRYRGPRFKKIRRLGALPGLTSKRPRAGSDPRNQSRSGKKSQY). An S4 RNA-binding domain is found at 89–152 (MRLDNTLFRL…NSRTLVQNLL (64 aa)).

This sequence belongs to the universal ribosomal protein uS4 family. As to quaternary structure, part of the 30S ribosomal subunit. Contacts protein S5. The interaction surface between S4 and S5 is involved in control of translational fidelity.

The protein localises to the plastid. It localises to the chloroplast. In terms of biological role, one of the primary rRNA binding proteins, it binds directly to 16S rRNA where it nucleates assembly of the body of the 30S subunit. Its function is as follows. With S5 and S12 plays an important role in translational accuracy. In Draba nemorosa (Woodland whitlowgrass), this protein is Small ribosomal subunit protein uS4c (rps4).